We begin with the raw amino-acid sequence, 496 residues long: Cytochrome P450 3A56 (496 aa).

A heme-binding site is contributed by Cys441.

It belongs to the cytochrome P450 family. The cofactor is heme. Highly expressed in liver and intestine. Moderate expression in gill and spleen. Low expression in kidney, brain and heart.

Its subcellular location is the endoplasmic reticulum membrane. It localises to the microsome membrane. The catalysed reaction is an organic molecule + reduced [NADPH--hemoprotein reductase] + O2 = an alcohol + oxidized [NADPH--hemoprotein reductase] + H2O + H(+). In terms of biological role, putative steroid 6-beta-hydroxylase. The chain is Cytochrome P450 3A56 (cyp3a56) from Fundulus heteroclitus (Killifish).